A 253-amino-acid polypeptide reads, in one-letter code: Bacitracin export ATP-binding protein BceA (253 aa).

The ABC transporter domain occupies 4–243 (LEATNIHKSY…TFFKDIMKTQ (240 aa)). 40 to 47 (GASGSGKT) serves as a coordination point for ATP.

Belongs to the ABC transporter superfamily. As to quaternary structure, the complex is composed of two ATP-binding proteins (BceA) and two transmembrane proteins (BceB).

In terms of biological role, part of the ABC transporter complex BceAB (TC 3.A.1.123.5) involved in bacitracin export. Responsible for energy coupling to the transport system. This is Bacitracin export ATP-binding protein BceA (bceA) from Halalkalibacterium halodurans (strain ATCC BAA-125 / DSM 18197 / FERM 7344 / JCM 9153 / C-125) (Bacillus halodurans).